We begin with the raw amino-acid sequence, 146 residues long: Large ribosomal subunit protein uL15 (146 aa).

Residues methionine 1–glutamine 54 are disordered. Composition is skewed to gly residues over residues arginine 21 to alanine 31 and serine 42 to glycine 52.

Belongs to the universal ribosomal protein uL15 family. In terms of assembly, part of the 50S ribosomal subunit.

Functionally, binds to the 23S rRNA. The polypeptide is Large ribosomal subunit protein uL15 (Clostridium botulinum (strain Alaska E43 / Type E3)).